The chain runs to 465 residues: ATP synthase subunit beta (465 aa).

152–159 (GGAGVGKT) is an ATP binding site.

Belongs to the ATPase alpha/beta chains family. F-type ATPases have 2 components, CF(1) - the catalytic core - and CF(0) - the membrane proton channel. CF(1) has five subunits: alpha(3), beta(3), gamma(1), delta(1), epsilon(1). CF(0) has three main subunits: a(1), b(2) and c(9-12). The alpha and beta chains form an alternating ring which encloses part of the gamma chain. CF(1) is attached to CF(0) by a central stalk formed by the gamma and epsilon chains, while a peripheral stalk is formed by the delta and b chains.

It localises to the cell membrane. The enzyme catalyses ATP + H2O + 4 H(+)(in) = ADP + phosphate + 5 H(+)(out). Its function is as follows. Produces ATP from ADP in the presence of a proton gradient across the membrane. The catalytic sites are hosted primarily by the beta subunits. This Ruminiclostridium cellulolyticum (strain ATCC 35319 / DSM 5812 / JCM 6584 / H10) (Clostridium cellulolyticum) protein is ATP synthase subunit beta.